Reading from the N-terminus, the 429-residue chain is Enolase (429 aa).

Position 163 (Gln163) interacts with (2R)-2-phosphoglycerate. Residue Glu205 is the Proton donor of the active site. Residues Asp242, Glu287, and Asp314 each contribute to the Mg(2+) site. Positions 339, 368, 369, and 390 each coordinate (2R)-2-phosphoglycerate. The active-site Proton acceptor is Lys339.

This sequence belongs to the enolase family. It depends on Mg(2+) as a cofactor.

Its subcellular location is the cytoplasm. It is found in the secreted. The protein resides in the cell surface. The catalysed reaction is (2R)-2-phosphoglycerate = phosphoenolpyruvate + H2O. It participates in carbohydrate degradation; glycolysis; pyruvate from D-glyceraldehyde 3-phosphate: step 4/5. In terms of biological role, catalyzes the reversible conversion of 2-phosphoglycerate (2-PG) into phosphoenolpyruvate (PEP). It is essential for the degradation of carbohydrates via glycolysis. The chain is Enolase from Anaeromyxobacter dehalogenans (strain 2CP-C).